Here is a 206-residue protein sequence, read N- to C-terminus: Large ribosomal subunit protein uL4 (206 aa).

The segment at 63 to 97 (MYKQKGTGRARHHSARAPQFRGGGKAHGPVVRSHE) is disordered. Positions 64 to 77 (YKQKGTGRARHHSA) are enriched in basic residues.

The protein belongs to the universal ribosomal protein uL4 family. As to quaternary structure, part of the 50S ribosomal subunit.

One of the primary rRNA binding proteins, this protein initially binds near the 5'-end of the 23S rRNA. It is important during the early stages of 50S assembly. It makes multiple contacts with different domains of the 23S rRNA in the assembled 50S subunit and ribosome. Functionally, forms part of the polypeptide exit tunnel. In Rhizobium johnstonii (strain DSM 114642 / LMG 32736 / 3841) (Rhizobium leguminosarum bv. viciae), this protein is Large ribosomal subunit protein uL4.